A 264-amino-acid chain; its full sequence is S-adenosylmethionine decarboxylase proenzyme (264 aa).

The active-site Schiff-base intermediate with substrate; via pyruvic acid is the S113. Position 113 is a pyruvic acid (Ser); by autocatalysis (S113). The Proton acceptor; for processing activity role is filled by H118. C141 (proton donor; for catalytic activity) is an active-site residue.

It belongs to the prokaryotic AdoMetDC family. Type 2 subfamily. In terms of assembly, heterooctamer of four alpha and four beta chains arranged as a tetramer of alpha/beta heterodimers. Pyruvate is required as a cofactor. In terms of processing, is synthesized initially as an inactive proenzyme. Formation of the active enzyme involves a self-maturation process in which the active site pyruvoyl group is generated from an internal serine residue via an autocatalytic post-translational modification. Two non-identical subunits are generated from the proenzyme in this reaction, and the pyruvate is formed at the N-terminus of the alpha chain, which is derived from the carboxyl end of the proenzyme. The post-translation cleavage follows an unusual pathway, termed non-hydrolytic serinolysis, in which the side chain hydroxyl group of the serine supplies its oxygen atom to form the C-terminus of the beta chain, while the remainder of the serine residue undergoes an oxidative deamination to produce ammonia and the pyruvoyl group blocking the N-terminus of the alpha chain.

It carries out the reaction S-adenosyl-L-methionine + H(+) = S-adenosyl 3-(methylsulfanyl)propylamine + CO2. It participates in amine and polyamine biosynthesis; S-adenosylmethioninamine biosynthesis; S-adenosylmethioninamine from S-adenosyl-L-methionine: step 1/1. Functionally, catalyzes the decarboxylation of S-adenosylmethionine to S-adenosylmethioninamine (dcAdoMet), the propylamine donor required for the synthesis of the polyamines spermine and spermidine from the diamine putrescine. In Pseudomonas syringae pv. tomato (strain ATCC BAA-871 / DC3000), this protein is S-adenosylmethionine decarboxylase proenzyme.